Here is a 216-residue protein sequence, read N- to C-terminus: MSEAYFPVESGALGPEENFLSLDDILMSQEKLPVRVETPMPRLGAFFLERGAGSEPDHPLPQGTKLELPLWLAKGLFDHKRRILSVELPKMYQEGWRTVFSADANVVDLHKMGPHFYGFGSQLLHFDSPENADISQSLLKTFIGRFRRIMDSSQNSYNEDTSALVARLDETERGLFQIGQRSLNDFQSWEKGQASQITASSLVQNYKKRKFTNMED.

The segment at 1 to 16 is not essential for folding and stability of GINS complex, but may regulate accessibility to the central complex pore; it reads MSEAYFPVESGALGPE.

The protein belongs to the GINS3/PSF3 family. Component of the GINS complex which is a heterotetramer of GINS1, GINS2, GINS3 and GINS4. Forms a stable subcomplex with GINS2. GINS complex interacts with DNA primase in vitro. Component of the CMG helicase complex, a hexameric ring of related MCM2-7 subunits stabilized by CDC45 and the tetrameric GINS complex.

The protein resides in the nucleus. The protein localises to the chromosome. In terms of biological role, required for correct functioning of the GINS complex, a complex that plays an essential role in the initiation of DNA replication, and progression of DNA replication forks. GINS complex is a core component of CDC45-MCM-GINS (CMG) helicase, the molecular machine that unwinds template DNA during replication, and around which the replisome is built. The sequence is that of DNA replication complex GINS protein PSF3 (Gins3) from Mus musculus (Mouse).